Here is a 187-residue protein sequence, read N- to C-terminus: Large ribosomal subunit protein uL6 (187 aa).

It belongs to the universal ribosomal protein uL6 family. As to quaternary structure, part of the 50S ribosomal subunit.

Its function is as follows. This protein binds to the 23S rRNA, and is important in its secondary structure. It is located near the subunit interface in the base of the L7/L12 stalk, and near the tRNA binding site of the peptidyltransferase center. In Roseiflexus castenholzii (strain DSM 13941 / HLO8), this protein is Large ribosomal subunit protein uL6.